The primary structure comprises 161 residues: Epoxidase gkaX (161 aa).

Positions 1 to 18 (MSLSTSLRLLRLLPAISS) are cleaved as a signal peptide. N45 carries an N-linked (GlcNAc...) asparagine glycan. 3 consecutive transmembrane segments (helical) span residues 59 to 79 (WQWI…LNLV), 92 to 112 (IWYV…KMAL), and 139 to 159 (WVRA…AAVS).

It belongs to the epoxidase xenD family.

It localises to the membrane. It participates in mycotoxin biosynthesis. Its function is as follows. Epoxidase; part of the gene cluster that mediates the biosynthesis of GKK1032, fungal natural products containing a macrocyclic para-cyclophane connected to a decahydrofluorene ring system that show potent antitumor activities. Within the pathway, gkaX functions synergistically with gkaB and gkaZ to form the cyclophane. The pathway begins with the PKS-NRPS gkaA which, with the help of the trans-enoyl reductase gkaC, synthesizes the polyketide-tyrosyl acyl thioester product which can be reductively off-loaded by the terminal reductase (R) domain in gkaA. The alpha/beta hydrolase gkaG is then required to catalyze the subsequent Knoevenagel condensation that affords the 3-pyrrolin-2-one ring, whereas the three proteins gkaB, gkaX and gkaZ then function synergistically to form the cyclophane. The sequence is that of Epoxidase gkaX from Penicillium citrinum.